A 199-amino-acid polypeptide reads, in one-letter code: Dephospho-CoA kinase (199 aa).

A DPCK domain is found at 3-199; that stretch reads VIGLTGSIGM…AAAKMPRRRS (197 aa). An ATP-binding site is contributed by 11–16; that stretch reads GMGKST.

The protein belongs to the CoaE family.

It is found in the cytoplasm. It catalyses the reaction 3'-dephospho-CoA + ATP = ADP + CoA + H(+). Its pathway is cofactor biosynthesis; coenzyme A biosynthesis; CoA from (R)-pantothenate: step 5/5. In terms of biological role, catalyzes the phosphorylation of the 3'-hydroxyl group of dephosphocoenzyme A to form coenzyme A. In Nitrobacter winogradskyi (strain ATCC 25391 / DSM 10237 / CIP 104748 / NCIMB 11846 / Nb-255), this protein is Dephospho-CoA kinase.